The sequence spans 496 residues: MDISISWVVIIVFVLSYLILMDKWRASKLPGNLPPSPPKLPVIGHLHLLRGGLPQHVLRGITQKYGAVAHLQLGEVHSVVLSSAESTKQAMKVLDPTFADRFDSIGSQIMWYNNDDMIFSRYNDHWRQIRKICVSELLSPRNVRSFGFIRQDEMARLIRVFESSEGAAINASEEISKMSCAIVCRAAFGSVLKDQGKLADLVKEALSMASGFELADLYPSSWLLNLLCFNKYRLQRMRGRLDNILDGFLEEHKVKKSGEFGGEDIIDVLYRMQKDTEMKAPITNNGIKGFIFDVFSAGTETSATTIQWALSELMKNPEKMVKAQAEVREKLKGKTNPDVADVQELKYLHSVVKETLRLHPPFPLIPRLCKEECEVTGYTIPAKTRILVNVWSIGRDPAYWKDPDTFNPDRFDEVSRDVIGNDFELIPFGAGRRVCPGLHFGLANVEVPLAQLLYHFDYKLPSAMTAADMDMSETPGLSGPRKNPLIMIPTIHNPTS.

The chain crosses the membrane as a helical; Signal-anchor for type II membrane protein span at residues 1–21 (MDISISWVVIIVFVLSYLILM). Cys435 lines the heme pocket.

Belongs to the cytochrome P450 family. The cofactor is heme. As to expression, mostly expressed in flowers and, to a lower extent, in leaves, especially in glandular trichomes.

The protein resides in the membrane. It carries out the reaction (4R)-limonene + reduced [NADPH--hemoprotein reductase] + O2 = (1R,5S)-carveol + oxidized [NADPH--hemoprotein reductase] + H2O + H(+). It catalyses the reaction (4S)-limonene + reduced [NADPH--hemoprotein reductase] + O2 = (1S,5R)-carveol + oxidized [NADPH--hemoprotein reductase] + H2O + H(+). The enzyme catalyses gamma-terpinene + 2 reduced [NADPH--hemoprotein reductase] + 2 O2 = carvacrol + 2 oxidized [NADPH--hemoprotein reductase] + 3 H2O + 2 H(+). It participates in secondary metabolite biosynthesis; terpenoid biosynthesis. In terms of biological role, involved in the biosynthesis of phenolic monoterpenes natural products thymol and carvacrol which have a broad range of biological activities acting as antimicrobial compounds, insecticides, antioxidants and pharmaceutical agents. Catalyzes the C2-hydroxylation of gamma-terpinene to produce carvacrol. Mediates also the C6-hydroxylation of (4S)-limonene and (4R)-limonene to form carveol. The polypeptide is Cytochrome P450 71D180 (Thymus vulgaris (Thyme)).